The following is a 140-amino-acid chain: UPF0251 protein Athe_2281 (140 aa).

Belongs to the UPF0251 family.

In Caldicellulosiruptor bescii (strain ATCC BAA-1888 / DSM 6725 / KCTC 15123 / Z-1320) (Anaerocellum thermophilum), this protein is UPF0251 protein Athe_2281.